The primary structure comprises 334 residues: Protein-methionine-sulfoxide reductase catalytic subunit MsrP (334 aa).

Residues 1 to 44 (MKKNQFLKESDVTAESVFFMKRRQVLKALGISAAALSLPHAAHA) constitute a signal peptide (tat-type signal). Residues asparagine 88, 91-92 (YE), cysteine 146, threonine 181, asparagine 233, arginine 238, and 249-251 (GIK) contribute to the Mo-molybdopterin site.

The protein belongs to the MsrP family. Heterodimer of a catalytic subunit (MsrP) and a heme-binding subunit (MsrQ). It depends on Mo-molybdopterin as a cofactor. Post-translationally, predicted to be exported by the Tat system. The position of the signal peptide cleavage has not been experimentally proven.

The protein localises to the periplasm. The catalysed reaction is L-methionyl-[protein] + a quinone + H2O = L-methionyl-(S)-S-oxide-[protein] + a quinol. It catalyses the reaction L-methionyl-[protein] + a quinone + H2O = L-methionyl-(R)-S-oxide-[protein] + a quinol. Its function is as follows. Part of the MsrPQ system that repairs oxidized periplasmic proteins containing methionine sulfoxide residues (Met-O), using respiratory chain electrons. Thus protects these proteins from oxidative-stress damage caused by reactive species of oxygen and chlorine generated by the host defense mechanisms. MsrPQ is essential for the maintenance of envelope integrity under bleach stress, rescuing a wide series of structurally unrelated periplasmic proteins from methionine oxidation, including the primary periplasmic chaperone SurA and the lipoprotein Pal. The catalytic subunit MsrP is non-stereospecific, being able to reduce both (R-) and (S-) diastereoisomers of methionine sulfoxide. In Escherichia coli O81 (strain ED1a), this protein is Protein-methionine-sulfoxide reductase catalytic subunit MsrP.